Here is a 285-residue protein sequence, read N- to C-terminus: Tetraspanin-3 (285 aa).

Residues 1–6 lie on the Cytoplasmic side of the membrane; the sequence is MRTSNH. A helical transmembrane segment spans residues 7-27; it reads LIGLVNFLTFLLSIPILGGGI. Over 28 to 43 the chain is Extracellular; that stretch reads WLSSRANSTDCLRFLQ. N-linked (GlcNAc...) asparagine glycosylation is present at asparagine 34. Residues 44-64 traverse the membrane as a helical segment; it reads WPLIVIGISIMVVSLAGFAGA. At 65 to 71 the chain is on the cytoplasmic side; that stretch reads CYRNKFL. A helical membrane pass occupies residues 72–92; that stretch reads MWLYLVVMLLIIAALIGFIIF. Residues 93–235 are Extracellular-facing; that stretch reads AYAVTDKGSG…LGSLKKSWRK (143 aa). Asparagine 187 carries N-linked (GlcNAc...) asparagine glycosylation. The helical transmembrane segment at 236–256 threads the bilayer; that stretch reads VSVINIVVLIILVIFYVIAYA. The Cytoplasmic segment spans residues 257 to 285; that stretch reads AYRNVKRIDNDEPAGEARMTKSHPSHFHL.

The protein belongs to the tetraspanin (TM4SF) family.

The protein localises to the cell membrane. Its function is as follows. May be involved in the regulation of cell differentiation. The sequence is that of Tetraspanin-3 (TET3) from Arabidopsis thaliana (Mouse-ear cress).